The primary structure comprises 185 residues: Large ribosomal subunit protein uL30 (185 aa).

This sequence belongs to the universal ribosomal protein uL30 family. Part of the 50S ribosomal subunit.

The polypeptide is Large ribosomal subunit protein uL30 (Caldivirga maquilingensis (strain ATCC 700844 / DSM 13496 / JCM 10307 / IC-167)).